The chain runs to 233 residues: ATP-dependent Clp protease proteolytic subunit 2 (233 aa).

Ser-116 functions as the Nucleophile in the catalytic mechanism. Residue His-141 is part of the active site. The disordered stretch occupies residues Glu-214–Ala-233.

It belongs to the peptidase S14 family. In terms of assembly, fourteen ClpP subunits assemble into 2 heptameric rings which stack back to back to give a disk-like structure with a central cavity, resembling the structure of eukaryotic proteasomes.

It localises to the cytoplasm. The catalysed reaction is Hydrolysis of proteins to small peptides in the presence of ATP and magnesium. alpha-casein is the usual test substrate. In the absence of ATP, only oligopeptides shorter than five residues are hydrolyzed (such as succinyl-Leu-Tyr-|-NHMec, and Leu-Tyr-Leu-|-Tyr-Trp, in which cleavage of the -Tyr-|-Leu- and -Tyr-|-Trp bonds also occurs).. Cleaves peptides in various proteins in a process that requires ATP hydrolysis. Has a chymotrypsin-like activity. Plays a major role in the degradation of misfolded proteins. This Salinibacter ruber (strain DSM 13855 / M31) protein is ATP-dependent Clp protease proteolytic subunit 2.